A 393-amino-acid polypeptide reads, in one-letter code: Mitogen-activated protein kinase SIPK (393 aa).

The span at methionine 1–methionine 11 shows a compositional bias: polar residues. The segment at methionine 1 to aspartate 31 is disordered. The Protein kinase domain maps to lysine 60–leucine 345. ATP contacts are provided by residues isoleucine 66 to valine 74 and lysine 89. Catalysis depends on aspartate 186, which acts as the Proton acceptor. Positions threonine 218–tyrosine 220 match the TXY motif.

It belongs to the protein kinase superfamily. CMGC Ser/Thr protein kinase family. MAP kinase subfamily. In terms of assembly, interacts with SIPKK.

It carries out the reaction L-tyrosyl-[protein] + ATP = O-phospho-L-tyrosyl-[protein] + ADP + H(+). The catalysed reaction is L-seryl-[protein] + ATP = O-phospho-L-seryl-[protein] + ADP + H(+). It catalyses the reaction L-threonyl-[protein] + ATP = O-phospho-L-threonyl-[protein] + ADP + H(+). Activated by threonine and tyrosine phosphorylation. Phosphorylates myelin basic protein (MBP) in vitro. May be involved in disease resistance. The protein is Mitogen-activated protein kinase SIPK of Nicotiana tabacum (Common tobacco).